The following is a 325-amino-acid chain: MNSSFHLHFLDLNLNATEGNLSGPNVKNKSSPCEDMGIAVEVFLTLGVISLLENILVIGAIVKNKNLHSPMYFFVCSLAVADMLVSMSSAWETITIYLLNNKHLVIADAFVRHIDNVFDSMICISVVASMCSLLAIAVDRYVTIFYALRYHHIMTARRSGAIIAGIWAFCTGCGIVFILYSESTYVILCLISMFFAMLFLLVSLYIHMFLLARTHVKRIAALPRASSARQRTSMQGAVTVTMLLGVFTVCWAPFFLHLTLMLSCPQNLYCSCFMSHFNMYLILIMCNSVMDPLIYAFRSQEMRKTFKEIICCRGFRIACSFPRRD.

Over 1-37 (MNSSFHLHFLDLNLNATEGNLSGPNVKNKSSPCEDMG) the chain is Extracellular. N-linked (GlcNAc...) asparagine glycans are attached at residues N2, N15, N20, and N28. Residues 38-61 (IAVEVFLTLGVISLLENILVIGAI) form a helical membrane-spanning segment. Residues 62-73 (VKNKNLHSPMYF) are Cytoplasmic-facing. The chain crosses the membrane as a helical span at residues 74 to 97 (FVCSLAVADMLVSMSSAWETITIY). The Extracellular portion of the chain corresponds to 98–114 (LLNNKHLVIADAFVRHI). Residues 115 to 138 (DNVFDSMICISVVASMCSLLAIAV) traverse the membrane as a helical segment. The Cytoplasmic segment spans residues 139-155 (DRYVTIFYALRYHHIMT). A helical transmembrane segment spans residues 156-179 (ARRSGAIIAGIWAFCTGCGIVFIL). Topologically, residues 180–186 (YSESTYV) are extracellular. The chain crosses the membrane as a helical span at residues 187–211 (ILCLISMFFAMLFLLVSLYIHMFLL). Residues 212–239 (ARTHVKRIAALPRASSARQRTSMQGAVT) are Cytoplasmic-facing. A helical membrane pass occupies residues 240 to 265 (VTMLLGVFTVCWAPFFLHLTLMLSCP). Topologically, residues 266–273 (QNLYCSCF) are extracellular. Residues 274-297 (MSHFNMYLILIMCNSVMDPLIYAF) form a helical membrane-spanning segment. The Cytoplasmic portion of the chain corresponds to 298-325 (RSQEMRKTFKEIICCRGFRIACSFPRRD). 2 S-palmitoyl cysteine lipidation sites follow: C311 and C312.

This sequence belongs to the G-protein coupled receptor 1 family.

It is found in the cell membrane. Functionally, receptor for MSH (alpha, beta and gamma) and ACTH. The activity of this receptor is mediated by G proteins which activate adenylate cyclase. This receptor is a possible mediator of the immunomodulation properties of melanocortins. This chain is Melanocortin receptor 5 (MC5R), found in Pan troglodytes (Chimpanzee).